A 954-amino-acid chain; its full sequence is Valine--tRNA ligase (954 aa).

A 'HIGH' region motif is present at residues 48 to 58 (PNVTGSLHMGH). Positions 560–564 (KMSKS) match the 'KMSKS' region motif. Lys-563 lines the ATP pocket. Residues 883–953 (AGFINKEAEL…IQEQYKAIEA (71 aa)) adopt a coiled-coil conformation.

The protein belongs to the class-I aminoacyl-tRNA synthetase family. ValS type 1 subfamily. As to quaternary structure, monomer.

The protein resides in the cytoplasm. It catalyses the reaction tRNA(Val) + L-valine + ATP = L-valyl-tRNA(Val) + AMP + diphosphate. In terms of biological role, catalyzes the attachment of valine to tRNA(Val). As ValRS can inadvertently accommodate and process structurally similar amino acids such as threonine, to avoid such errors, it has a 'posttransfer' editing activity that hydrolyzes mischarged Thr-tRNA(Val) in a tRNA-dependent manner. This is Valine--tRNA ligase from Haemophilus influenzae (strain PittEE).